The chain runs to 238 residues: Uridylate kinase (238 aa).

Residue 10-13 (KFSG) coordinates ATP. Positions 18-23 (GDSGFG) are involved in allosteric activation by GTP. Glycine 52 contacts UMP. Residues glycine 53 and arginine 57 each coordinate ATP. Residues aspartate 73 and 134–141 (TGNPFFTT) contribute to the UMP site. 3 residues coordinate ATP: threonine 161, tyrosine 167, and aspartate 170.

The protein belongs to the UMP kinase family. As to quaternary structure, homohexamer.

The protein resides in the cytoplasm. The catalysed reaction is UMP + ATP = UDP + ADP. It participates in pyrimidine metabolism; CTP biosynthesis via de novo pathway; UDP from UMP (UMPK route): step 1/1. Allosterically activated by GTP. Inhibited by UTP. Its function is as follows. Catalyzes the reversible phosphorylation of UMP to UDP. In Campylobacter curvus (strain 525.92), this protein is Uridylate kinase.